The chain runs to 86 residues: Serine protease inhibitor Kazal-type 2 (86 aa).

The signal sequence occupies residues 1–16; it reads MLRLVLLLLATDFAAS. A Kazal-like domain is found at 32–86; the sequence is QFRTPDCHRFDYPVCSKHLSPVCGTDMNTYGNECTLCMKIREDGSHINIIKDEPC. 3 disulfides stabilise this stretch: cysteine 38/cysteine 68, cysteine 46/cysteine 65, and cysteine 54/cysteine 86.

Its subcellular location is the secreted. The protein resides in the cytoplasmic vesicle. It is found in the secretory vesicle. The protein localises to the acrosome. As a strong inhibitor of acrosin, it is required for normal spermiogenesis. It probably hinders premature activation of proacrosin and other proteases, thus preventing the cascade of events leading to spermiogenesis defects. May be involved in the regulation of serine protease-dependent germ cell apoptosis. It also inhibits trypsin. The polypeptide is Serine protease inhibitor Kazal-type 2 (Spink2) (Rattus norvegicus (Rat)).